The primary structure comprises 255 residues: 3-alpha-(or 20-beta)-hydroxysteroid dehydrogenase (255 aa).

10 to 34 (IITGGARGLGAEAARQAVAAGARVV) contacts NAD(+). Serine 139 provides a ligand contact to substrate. The active-site Proton acceptor is the tyrosine 152.

Belongs to the short-chain dehydrogenases/reductases (SDR) family. As to quaternary structure, homotetramer.

The catalysed reaction is androstan-3alpha,17beta-diol + NAD(+) = 17beta-hydroxyandrostanone + NADH + H(+). The protein operates within lipid metabolism; C21-steroid hormone metabolism. This chain is 3-alpha-(or 20-beta)-hydroxysteroid dehydrogenase, found in Streptomyces exfoliatus (Streptomyces hydrogenans).